Here is a 160-residue protein sequence, read N- to C-terminus: SsrA-binding protein (160 aa).

Residues 1–23 (MARKKKQDKGQGPKTIAQNRRAR) are disordered.

The protein belongs to the SmpB family.

The protein localises to the cytoplasm. Required for rescue of stalled ribosomes mediated by trans-translation. Binds to transfer-messenger RNA (tmRNA), required for stable association of tmRNA with ribosomes. tmRNA and SmpB together mimic tRNA shape, replacing the anticodon stem-loop with SmpB. tmRNA is encoded by the ssrA gene; the 2 termini fold to resemble tRNA(Ala) and it encodes a 'tag peptide', a short internal open reading frame. During trans-translation Ala-aminoacylated tmRNA acts like a tRNA, entering the A-site of stalled ribosomes, displacing the stalled mRNA. The ribosome then switches to translate the ORF on the tmRNA; the nascent peptide is terminated with the 'tag peptide' encoded by the tmRNA and targeted for degradation. The ribosome is freed to recommence translation, which seems to be the essential function of trans-translation. This is SsrA-binding protein from Thermobifida fusca (strain YX).